The following is a 1581-amino-acid chain: Mediator of RNA polymerase II transcription subunit 1 (1581 aa).

Residues 1–670 (MKAQGETEES…YGSSPLERQN (670 aa)) are interaction with the Mediator complex and THRA. The tract at residues 16–590 (MSSLLERLHA…SIKDRHESVG (575 aa)) is interaction with ESR1. 2 interaction with the Mediator complex regions span residues 108–212 (FYVE…GYLT) and 215–390 (SGGH…SLQG). The interval 405 to 644 (PLILNLIRHQ…MAGNTKNHPM (240 aa)) is interaction with THRA. The interval 542-788 (PASSPGYGMT…TDILSDIAEE (247 aa)) is interaction with VDR. Residue Ser-588 is modified to Phosphoserine. The short motif at 604-608 (LTSLL) is the LXXLL motif 1 element. 4 disordered regions span residues 609-705 (QITG…HQTE), 791-819 (KLPS…QSTL), 868-895 (LSNS…DDFK), and 947-1566 (EHHS…DFMI). The segment covering 622–632 (PTPPHHTPPPV) has biased composition (pro residues). The interaction with PPARGC1A and THRA stretch occupies residues 622-701 (PTPPHHTPPP…SSRLPPEKPK (80 aa)). The LXXLL motif 2 motif lies at 645–649 (LMNLL). The segment covering 655–675 (QDFSTLYGSSPLERQNSSSGS) has biased composition (polar residues). The interaction with ESR1 stretch occupies residues 656 to 1065 (DFSTLYGSSP…TPPIPKITIQ (410 aa)). A Phosphoserine modification is found at Ser-664. An interaction with GATA1 region spans residues 681-715 (CSGSNKTKKKESSRLPPEKPKHQTEDDFQRELFSM). The segment covering 690 to 705 (KESSRLPPEKPKHQTE) has biased composition (basic and acidic residues). Ser-794 carries the phosphoserine modification. Thr-804 is modified (phosphothreonine). Residues 807–819 (RDSSSSGHSQSTL) are compositionally biased toward polar residues. Positions 874 to 901 (QSGFGEEYFDESSQSGDNDDFKGFASQA) match the Integrase domain-binding motif (IBM) motif. 2 positions are modified to phosphoserine: Ser-886 and Ser-952. The span at 962 to 973 (LGKEKTQKRVKE) shows a compositional bias: basic and acidic residues. Thr-1031 carries the post-translational modification Phosphothreonine; by MAPK1 or MAPK3. The segment covering 1033–1050 (PTSTGGSKSPGSSGRSQT) has biased composition (low complexity). Residues Thr-1050 and Thr-1056 each carry the phosphothreonine modification. 3 stretches are compositionally biased toward low complexity: residues 1077–1093 (SSHS…SSGS), 1100–1111 (SSSSSSSSASTS), and 1119–1156 (SEGS…PGSS). Ser-1156 is modified (phosphoserine). Over residues 1162–1195 (GLSSGSSSTKMKPQGKPSSLMNPSLSKPNISPSH) the composition is skewed to polar residues. Residue Lys-1177 is modified to N6-acetyllysine. Ser-1207 carries the post-translational modification Phosphoserine. Phosphothreonine is present on Thr-1215. 2 stretches are compositionally biased toward low complexity: residues 1218 to 1227 (SSKAKSPISS) and 1234 to 1293 (MSGT…SKGK). Ser-1223 carries the post-translational modification Phosphoserine. The interval 1249-1421 (LGSSGSLSQK…KPGESSGEGL (173 aa)) is interaction with TP53. The residue at position 1302 (Ser-1302) is a Phosphoserine. Residues 1330–1345 (GVSTNSSSHPMSSKHN) are compositionally biased toward polar residues. Ser-1347 is subject to Phosphoserine. Residues 1352 to 1364 (QGKREKSDKDKSK) are compositionally biased toward basic and acidic residues. A phosphoserine mark is found at Ser-1403 and Ser-1433. Polar residues-rich tracts occupy residues 1425–1440 (MASS…SGST) and 1448–1482 (PSHS…SPSS). Thr-1440 is subject to Phosphothreonine. Thr-1457 is modified (phosphothreonine; by MAPK1 or MAPK3). Ser-1463, Ser-1465, Ser-1479, Ser-1481, and Ser-1482 each carry phosphoserine. Positions 1496-1505 (KHKKHKKEKK) are enriched in basic residues. The span at 1506 to 1522 (KVKDKDRDRDRDKDRDK) shows a compositional bias: basic and acidic residues. Lys-1529 carries the post-translational modification N6-acetyllysine. Residues 1533–1552 (WSKSPISSDQSLSMTSNTIL) are compositionally biased toward polar residues.

It belongs to the Mediator complex subunit 1 family. As to quaternary structure, component of the Mediator complex, which is composed of MED1, MED4, MED6, MED7, MED8, MED9, MED10, MED11, MED12, MED13, MED13L, MED14, MED15, MED16, MED17, MED18, MED19, MED20, MED21, MED22, MED23, MED24, MED25, MED26, MED27, MED29, MED30, MED31, CCNC, CDK8 and CDC2L6/CDK11. The MED12, MED13, CCNC and CDK8 subunits form a distinct module termed the CDK8 module. Mediator containing the CDK8 module is less active than Mediator lacking this module in supporting transcriptional activation. Individual preparations of the Mediator complex lacking one or more distinct subunits have been variously termed ARC, CRSP, DRIP, PC2, SMCC and TRAP. This subunit specifically interacts with a number of nuclear receptors in a ligand-dependent fashion including AR, ESR1, ESR2, PPARA, PPARG, RORA, RXRA, RXRG, THRA, THRB and VDR. Interacts with CTNNB1, GABPA, GLI3, PPARGC1A and TP53. Interacts with GATA1 and YWHAH. Interacts with CLOCK; this interaction requires the presence of THRAP3. Interacts with CCAR1. Interacts with NR4A3. Interacts (via IBM motif) with PSIP1 (via IBD domain); phosphorylation increases its affinity for PSIP1. Interacts with USP22. Phosphorylated by MAPK1 or MAPK3 during G2/M phase which may enhance protein stability and promote entry into the nucleolus. Phosphorylation increases its interaction with PSIP1.

The protein localises to the nucleus. In terms of biological role, component of the Mediator complex, a coactivator involved in the regulated transcription of nearly all RNA polymerase II-dependent genes. Mediator functions as a bridge to convey information from gene-specific regulatory proteins to the basal RNA polymerase II transcription machinery. Mediator is recruited to promoters by direct interactions with regulatory proteins and serves as a scaffold for the assembly of a functional preinitiation complex with RNA polymerase II and the general transcription factors. Acts as a coactivator for GATA1-mediated transcriptional activation during erythroid differentiation of K562 erythroleukemia cells. The chain is Mediator of RNA polymerase II transcription subunit 1 (MED1) from Pongo abelii (Sumatran orangutan).